The sequence spans 339 residues: 1-aminocyclopropane-1-carboxylate deaminase (339 aa).

Lys-52 carries the post-translational modification N6-(pyridoxal phosphate)lysine. The Nucleophile role is filled by Ser-79.

This sequence belongs to the ACC deaminase/D-cysteine desulfhydrase family. As to quaternary structure, homotrimer. Pyridoxal 5'-phosphate is required as a cofactor.

It carries out the reaction 1-aminocyclopropane-1-carboxylate + H2O = 2-oxobutanoate + NH4(+). Functionally, catalyzes a cyclopropane ring-opening reaction, the irreversible conversion of 1-aminocyclopropane-1-carboxylate (ACC) to ammonia and alpha-ketobutyrate. Allows growth on ACC as a nitrogen source. The chain is 1-aminocyclopropane-1-carboxylate deaminase from Bradyrhizobium sp. (strain ORS 278).